A 400-amino-acid polypeptide reads, in one-letter code: Enoyl-[acyl-carrier-protein] reductase [NADH] (400 aa).

NAD(+)-binding positions include 48-53 (GSSSGY), 74-75 (FE), 111-112 (DA), and 139-140 (LA). Tyrosine 225 provides a ligand contact to substrate. The active-site Proton donor is tyrosine 235. Residues lysine 244 and 273-275 (VVT) each bind NAD(+).

The protein belongs to the TER reductase family. Monomer.

It carries out the reaction a 2,3-saturated acyl-[ACP] + NAD(+) = a (2E)-enoyl-[ACP] + NADH + H(+). It functions in the pathway lipid metabolism; fatty acid biosynthesis. In terms of biological role, involved in the final reduction of the elongation cycle of fatty acid synthesis (FAS II). Catalyzes the reduction of a carbon-carbon double bond in an enoyl moiety that is covalently linked to an acyl carrier protein (ACP). The polypeptide is Enoyl-[acyl-carrier-protein] reductase [NADH] (Shewanella woodyi (strain ATCC 51908 / MS32)).